Consider the following 265-residue polypeptide: 6-oxopurine nucleoside phosphorylase (265 aa).

Phosphate contacts are provided by residues S10, 49–50, and 82–83; these read RH and SA. Disulfide bonds link C136–C202 and C162–C190. M187 serves as a coordination point for substrate. T188 serves as a coordination point for phosphate. A substrate-binding site is contributed by 211 to 213; sequence NYA. C254 and C256 form a disulfide bridge.

It belongs to the PNP/MTAP phosphorylase family. MTAP subfamily. In terms of assembly, homohexamer. Dimer of a homotrimer.

It carries out the reaction a purine D-ribonucleoside + phosphate = a purine nucleobase + alpha-D-ribose 1-phosphate. The catalysed reaction is guanosine + phosphate = alpha-D-ribose 1-phosphate + guanine. The enzyme catalyses inosine + phosphate = alpha-D-ribose 1-phosphate + hypoxanthine. It participates in purine metabolism; purine nucleoside salvage. Purine nucleoside phosphorylase which is highly specific for 6-oxopurine nucleosides. Cleaves guanosine or inosine to respective bases and sugar-1-phosphate molecules. Involved in purine salvage. This is 6-oxopurine nucleoside phosphorylase from Pyrococcus furiosus (strain ATCC 43587 / DSM 3638 / JCM 8422 / Vc1).